A 469-amino-acid chain; its full sequence is Putative F-box/LRR-repeat protein At5g02930 (469 aa).

Residues 27 to 77 (VDSISDLPDAVLQHIFSYIPTELAIRTSVLSKRWRHVWSETPHLSFEWLKV) form the F-box domain. LRR repeat units lie at residues 30 to 58 (ISDL…VLSK), 178 to 203 (DCTM…SLKF), 204 to 214 (CMSLKYLNLSK), 223 to 250 (IERI…RLRD), 296 to 321 (TMLK…SLSK), and 341 to 366 (IIRS…TVYT).

This Arabidopsis thaliana (Mouse-ear cress) protein is Putative F-box/LRR-repeat protein At5g02930.